A 229-amino-acid chain; its full sequence is Dolichyldiphosphatase 1 (229 aa).

The next 4 helical transmembrane spans lie at 27 to 47 (LFNA…ITLI), 94 to 114 (MPSS…LFYL), 120 to 140 (FGSK…AAGV), and 156 to 176 (FCGS…IEYI).

The protein belongs to the dolichyldiphosphatase family.

The protein resides in the endoplasmic reticulum membrane. The enzyme catalyses a di-trans,poly-cis-dolichyl diphosphate + H2O = a di-trans,poly-cis-dolichyl phosphate + phosphate + H(+). It participates in protein modification; protein glycosylation. Its function is as follows. Required for efficient N-glycosylation. Necessary for maintaining optimal levels of dolichol-linked oligosaccharides. Hydrolyzes dolichyl pyrophosphate at a very high rate and dolichyl monophosphate at a much lower rate. Does not act on phosphatidate. This is Dolichyldiphosphatase 1 (dolpp1) from Dictyostelium discoideum (Social amoeba).